We begin with the raw amino-acid sequence, 388 residues long: MNLHEYQGKQLFAEYGLPVSTGFAVDTPEAAAEACDKIGGNEWVVKAQVHAGGRGKSGGVKLVRSKEDAKAFAQQWLGKRLVTYQTDANGQPVTKILVESCTDIAKELYLGAVVDRSSRRIVFMASTEGGVDIEKIAHDTPEKILKATIDPLVGAQPFQGRELAFQLGLEGKQVAQFAKIFVGLAKLFKDHDLALLEVNPLVIKADGDLHCLDAKINIDANAMYRQPKLKTFHDPSQDDPREAHAAKFELNYVALEGNIGCMVNGAGLAMGTMDIVNLHGGKPANFLDVGGGATKERVTEAFKIILSDSNVAAVLVNIFGGIVRCDMIAEGIIGAVKEVGVKIPVVVRLEGNNAELGAKVLAESGLNIIAATSLTDAAQQVVKAAEGK.

The region spanning 9–244 is the ATP-grasp domain; that stretch reads KQLFAEYGLP…PSQDDPREAH (236 aa). ATP is bound by residues lysine 46, 53-55, glutamate 99, threonine 102, and glutamate 107; that span reads GRG. The Mg(2+) site is built by asparagine 199 and aspartate 213. Substrate is bound by residues asparagine 264 and 321–323; that span reads GIV.

This sequence belongs to the succinate/malate CoA ligase beta subunit family. As to quaternary structure, heterotetramer of two alpha and two beta subunits. Mg(2+) serves as cofactor.

The enzyme catalyses succinate + ATP + CoA = succinyl-CoA + ADP + phosphate. It catalyses the reaction GTP + succinate + CoA = succinyl-CoA + GDP + phosphate. It participates in carbohydrate metabolism; tricarboxylic acid cycle; succinate from succinyl-CoA (ligase route): step 1/1. Succinyl-CoA synthetase functions in the citric acid cycle (TCA), coupling the hydrolysis of succinyl-CoA to the synthesis of either ATP or GTP and thus represents the only step of substrate-level phosphorylation in the TCA. The beta subunit provides nucleotide specificity of the enzyme and binds the substrate succinate, while the binding sites for coenzyme A and phosphate are found in the alpha subunit. The chain is Succinate--CoA ligase [ADP-forming] subunit beta from Pseudomonas fluorescens (strain Pf0-1).